We begin with the raw amino-acid sequence, 999 residues long: Ulvan lyase, long isoform (999 aa).

A signal peptide spans 1–21; that stretch reads MKCLKTLLVSTTLLTAFSLNA. 126 to 127 provides a ligand contact to substrate; that stretch reads SH. Histidine 127 functions as the Proton donor/acceptor in the catalytic mechanism. Positions 189, 199, and 201 each coordinate Ca(2+). Positions 280 and 297 each coordinate substrate. 3 residues coordinate Ca(2+): aspartate 300, aspartate 303, and tyrosine 305. Tyrosine 361 is a substrate binding site.

This sequence belongs to the polysaccharide lyase 24 family.

Functionally, ulvan lyase involved in ulvan degradation. Ulvan is the main polysaccharide component of the Ulvales (green seaweed) cell wall. It is composed of disaccharide building blocks comprising 3-sulfated rhamnose (Rha3S) linked to D-glucuronic acid (GlcA), L-iduronic acid (IduA), or D-xylose (Xyl). Ulvan lyase catalyzes preferentially the endolytic cleavage of the glycosidic bond between Rha3S and the uronic acid GlcA, but not IduA, producing oligosaccharides that have unsaturated 4-deoxy-L-threo-hex-4-enopyranosiduronic acid (deltaUA) at the non-reducing end. The most abundant end products in the degradation of the ulvan polysaccharide were deltaUA-Rha3S disaccharides and deltaUA-Rha3S-IduA-Rha3S and deltaUA-Rha3S-Xyl-Rha3S tetrasaccharides. The sequence is that of Ulvan lyase, long isoform from Alteromonas sp. (strain LOR).